Here is a 465-residue protein sequence, read N- to C-terminus: Cytochrome c peroxidase Ccp (465 aa).

Over 1 to 6 (MKMVSR) the chain is Cytoplasmic. Residues 7–27 (ITAIGLAGVAICYLGLSGYVW) form a helical membrane-spanning segment. Residues 28–465 (YHDNKRSKQA…VYTPYMQDKQ (438 aa)) are Periplasmic-facing. 3 Cytochrome c domains span residues 42–155 (SAVS…AKQR), 185–287 (QKVA…EKDP), and 337–454 (AQQK…HSLN). Residues cysteine 59, cysteine 62, histidine 63, methionine 125, cysteine 207, cysteine 210, histidine 211, cysteine 351, cysteine 354, histidine 355, and methionine 429 each contribute to the heme c site.

In terms of assembly, the recombinant enzyme lacking its transmembrane domain is a monomer in solution. Heme c serves as cofactor.

The protein resides in the cell inner membrane. Does not require reductive activation for maximum activity, as peroxidatic heme is high-spin His/OH(-) 6-coordinated. Calcium ions are needed to attain maximum peroxidase activity. Functionally, cytochrome peroxidase that enables anaerobic respiration with H(2)O(2) as a terminal electron acceptor. It receives electrons from the quinol pool. Menaquinol is probably the electron donor in vivo. It can use menadiol (a menaquinol analog), hydroquinone, duroquinol and the artificial electron donor ABTS(2-) in vitro, but only menadiol and hydroquinone can efficiently transfer electrons to Ccp, maintaining the catalytic activity of the enzyme. It enables E.coli to grow on a nonfermentable carbon source when H(2)O(2) is supplied. Plays a role in the peroxide stress response under anaerobic conditions. However, it does not degrade H(2)O(2) quickly enough to lower the periplasmic H(2)O(2) level below that of the surrounding medium and protect the cell from its toxic effects. This Escherichia coli (strain K12) protein is Cytochrome c peroxidase Ccp.